We begin with the raw amino-acid sequence, 274 residues long: Penicillin-insensitive murein endopeptidase (274 aa).

Positions 1–19 are cleaved as a signal peptide; sequence MNKTAIALLALLASSASLA. 3 disulfide bridges follow: Cys-44-Cys-265, Cys-187-Cys-235, and Cys-216-Cys-223. 6 residues coordinate Zn(2+): His-110, His-113, Asp-120, Asp-147, His-150, and His-211. Residues 228 to 264 are disordered; sequence LPPPGDGCGAELQSWFAPPKPGTTKPEKKTPSPLPPS.

Belongs to the peptidase M74 family. As to quaternary structure, dimer. The cofactor is Zn(2+).

The protein resides in the periplasm. Its function is as follows. Murein endopeptidase that cleaves the D-alanyl-meso-2,6-diamino-pimelyl amide bond that connects peptidoglycan strands. Likely plays a role in the removal of murein from the sacculus. The chain is Penicillin-insensitive murein endopeptidase from Escherichia coli (strain 55989 / EAEC).